Here is a 60-residue protein sequence, read N- to C-terminus: Large ribosomal subunit protein bL32 (60 aa).

The disordered stretch occupies residues 1 to 60 (MAVQQNKKSPSKRGMHRSHDALTNPPLAIEPTTGETHLRHHISPNGFYRGKKVIKTKNDD). The span at 49 to 60 (RGKKVIKTKNDD) shows a compositional bias: basic residues.

This sequence belongs to the bacterial ribosomal protein bL32 family.

This is Large ribosomal subunit protein bL32 from Nitrosomonas eutropha (strain DSM 101675 / C91 / Nm57).